Consider the following 528-residue polypeptide: PC4 and SFRS1-interacting protein (528 aa).

In terms of domain architecture, PWWP spans 7–64; sequence PGDLIFAKMKGYPHWPARVDEVPDGAVKPPTNKLPIFFFGTHETAFLGPKDIFPYSEN. The disordered stretch occupies residues 61–348; it reads YSENKEKYGK…EKKRETSMDS (288 aa). Residue Lys-75 forms a Glycyl lysine isopeptide (Lys-Gly) (interchain with G-Cter in SUMO2) linkage. Polar residues predominate over residues 92-106; that stretch reads FSSQQASTKQSNASS. 3 positions are modified to phosphoserine: Ser-102, Ser-105, and Ser-106. Positions 113–135 are enriched in basic and acidic residues; that stretch reads KETNVSKEDTDQEEKASNEDVTK. A phosphothreonine mark is found at Thr-115 and Thr-122. Ser-129 is modified (phosphoserine). Position 141 is a phosphothreonine (Thr-141). The span at 144-153 shows a compositional bias: basic residues; it reads AARRGRKRKA. The short motif at 146–156 is the Nuclear localization signal element; the sequence is RRGRKRKAEKQ. Ser-176 and Ser-205 each carry phosphoserine. The segment covering 212 to 260 has biased composition (basic and acidic residues); sequence DEDKSKKKGPEEKQPKKQLKKEEEGQKEEEKPRKEPDKKEGKKEVESKR. Ser-270 is subject to Phosphoserine. Phosphothreonine is present on Thr-271. 2 positions are modified to phosphoserine: Ser-272 and Ser-274. Residues 285–300 are compositionally biased toward basic residues; that stretch reads KRKGGRNFQAAHRRNM. The span at 303-348 shows a compositional bias: basic and acidic residues; it reads GQHEKEAGDRKRKQEEQMETEQQNKDEGKKPEVKKVEKKRETSMDS. Coiled coils occupy residues 306-332 and 369-393; these read EKEA…EGKK and NRCI…KHTE. The integrase-binding domain (IBD) stretch occupies residues 338–415; the sequence is VEKKRETSMD…VSQVIMEKST (78 aa). A Phosphoserine modification is found at Ser-432. Thr-435 is subject to Phosphothreonine. Phosphoserine is present on Ser-441. The segment covering 444–471 has biased composition (basic and acidic residues); it reads EQRQHEEANKTKDQGKKGPNKKLEKEPT. The tract at residues 444-528 is disordered; sequence EQRQHEEANK…ISLKESTLDN (85 aa). Over residues 472–492 the composition is skewed to polar residues; the sequence is GTKSLNGGSDAQESNHPQHNG. Residues 496–528 show a composition bias toward basic and acidic residues; sequence EDGKDSREASSKTKPPGEEREAEISLKESTLDN. Position 515 is a citrulline (Arg-515). Ser-520 is subject to Phosphoserine. Thr-525 carries the post-translational modification Phosphothreonine.

The protein belongs to the HDGF family. As to quaternary structure, monomer. Interacts with IFRD1/PC4. Interacts (via IBD domain) with POGZ (via IBM motif) and CDCA7L (via IBM motifs). Interacts (via IBD domain) with KMT2A (via IBM motifs) with a moderate affinity whereas interacts with the KMT2A-MEN1 complex with a greater affinity; MEN1 enhances interaction of KMT2A with PSIP1. Interacts (via IBD domain) with IWS1 (via IBM motif), MED1 (via IBM motif) and DBF4 (via IBM motifs). In terms of processing, citrullinated by PADI4.

The protein resides in the nucleus. Transcriptional coactivator involved in neuroepithelial stem cell differentiation and neurogenesis. Involved in particular in lens epithelial cell gene regulation and stress responses. May play an important role in lens epithelial to fiber cell terminal differentiation. May play a protective role during stress-induced apoptosis. This Mus musculus (Mouse) protein is PC4 and SFRS1-interacting protein (Psip1).